We begin with the raw amino-acid sequence, 385 residues long: Cell division protein FtsZ (385 aa).

Residues 37–41 (GGGSN), 125–127 (GTG), Glu156, Lys160, and Asp204 contribute to the GTP site.

This sequence belongs to the FtsZ family. In terms of assembly, homodimer. Polymerizes to form a dynamic ring structure in a strictly GTP-dependent manner. Interacts directly with several other division proteins.

The protein resides in the cytoplasm. Essential cell division protein that forms a contractile ring structure (Z ring) at the future cell division site. The regulation of the ring assembly controls the timing and the location of cell division. One of the functions of the FtsZ ring is to recruit other cell division proteins to the septum to produce a new cell wall between the dividing cells. Binds GTP and shows GTPase activity. The sequence is that of Cell division protein FtsZ from Helicobacter pylori (strain J99 / ATCC 700824) (Campylobacter pylori J99).